Reading from the N-terminus, the 313-residue chain is Acetyl-coenzyme A carboxylase carboxyl transferase subunit alpha (313 aa).

The region spanning 42–292 is the CoA carboxyltransferase C-terminal domain; the sequence is KSDKLLRDTY…GAAIGEELDK (251 aa).

Belongs to the AccA family. In terms of assembly, acetyl-CoA carboxylase is a heterohexamer composed of biotin carboxyl carrier protein (AccB), biotin carboxylase (AccC) and two subunits each of ACCase subunit alpha (AccA) and ACCase subunit beta (AccD).

It localises to the cytoplasm. It carries out the reaction N(6)-carboxybiotinyl-L-lysyl-[protein] + acetyl-CoA = N(6)-biotinyl-L-lysyl-[protein] + malonyl-CoA. It participates in lipid metabolism; malonyl-CoA biosynthesis; malonyl-CoA from acetyl-CoA: step 1/1. In terms of biological role, component of the acetyl coenzyme A carboxylase (ACC) complex. First, biotin carboxylase catalyzes the carboxylation of biotin on its carrier protein (BCCP) and then the CO(2) group is transferred by the carboxyltransferase to acetyl-CoA to form malonyl-CoA. The chain is Acetyl-coenzyme A carboxylase carboxyl transferase subunit alpha from Rhizorhabdus wittichii (strain DSM 6014 / CCUG 31198 / JCM 15750 / NBRC 105917 / EY 4224 / RW1) (Sphingomonas wittichii).